Here is a 271-residue protein sequence, read N- to C-terminus: Thiazole synthase (271 aa).

Lys95 functions as the Schiff-base intermediate with DXP in the catalytic mechanism. 1-deoxy-D-xylulose 5-phosphate-binding positions include Gly156, 182-183 (AG), and 204-205 (NT).

Belongs to the ThiG family. Homotetramer. Forms heterodimers with either ThiH or ThiS.

It is found in the cytoplasm. It carries out the reaction [ThiS sulfur-carrier protein]-C-terminal-Gly-aminoethanethioate + 2-iminoacetate + 1-deoxy-D-xylulose 5-phosphate = [ThiS sulfur-carrier protein]-C-terminal Gly-Gly + 2-[(2R,5Z)-2-carboxy-4-methylthiazol-5(2H)-ylidene]ethyl phosphate + 2 H2O + H(+). The protein operates within cofactor biosynthesis; thiamine diphosphate biosynthesis. In terms of biological role, catalyzes the rearrangement of 1-deoxy-D-xylulose 5-phosphate (DXP) to produce the thiazole phosphate moiety of thiamine. Sulfur is provided by the thiocarboxylate moiety of the carrier protein ThiS. In vitro, sulfur can be provided by H(2)S. The sequence is that of Thiazole synthase from Shewanella amazonensis (strain ATCC BAA-1098 / SB2B).